Reading from the N-terminus, the 218-residue chain is Ribose-5-phosphate isomerase A (218 aa).

Substrate is bound by residues 28–31, 81–84, and 94–97; these read TGST, DGAD, and KGGG. Glutamate 103 (proton acceptor) is an active-site residue. A substrate-binding site is contributed by lysine 121.

The protein belongs to the ribose 5-phosphate isomerase family. Homodimer.

The enzyme catalyses aldehydo-D-ribose 5-phosphate = D-ribulose 5-phosphate. It participates in carbohydrate degradation; pentose phosphate pathway; D-ribose 5-phosphate from D-ribulose 5-phosphate (non-oxidative stage): step 1/1. Its function is as follows. Catalyzes the reversible conversion of ribose-5-phosphate to ribulose 5-phosphate. The chain is Ribose-5-phosphate isomerase A from Methylococcus capsulatus (strain ATCC 33009 / NCIMB 11132 / Bath).